Consider the following 576-residue polypeptide: MSDSMLYQTLQTCLPKSRLITLWLAFTLAMLIQEPRRHAATVNAATAGGSMLGDVNISAILDSFSVSYDKRVRPNYGGPPVEVGVTMYVLSISSLSEVKMDFTLDFYFRQFWTDPRLAYRKRPGVETLSVGSEFIKNIWVPDTFFVNEKQSYFHIATTSNEFIRVHHSGSITRSIRLTITASCPMNLQYFPMDRQLCHIEIESFGYTMRDIRYKWNEGPNSVGVSSEVSLPQFKVLGHRQRAVEISLTTGNYSRLACEIQFVRSMGYYLIQIYIPSGLIVVISWVSFWLNRNATPARVALGVTTVLTMTTLMSSTNAALPKISYVKSIDVYLGTCFVMVFASLLEYATVGYMAKRIQMRKQRFMTIQKMAEQKKQQQLDGVQPPPNPNPNTMVDHGGHGHGHGHHSHGHPHVPKQTVSNRPIGFQTMQQQNIGGRGCSIVGPLFQEVRFKVHDPKAHSKGGTLENTVNGGRGGPPVGPHGPGPQGPPGGPPAGGGGGGAPPEGGDAEAAVPAHLLHPGKVKKDINKLLGITPSDIDKYSRIVFPVCFVCFNLMYWIIYLHVSDVVADDLVLLGEEK.

The signal sequence occupies residues 1–29 (MSDSMLYQTLQTCLPKSRLITLWLAFTLA). At 30–268 (MLIQEPRRHA…IQFVRSMGYY (239 aa)) the chain is on the extracellular side. Asparagine 56 is a glycosylation site (N-linked (GlcNAc...) asparagine). Residues cysteine 183 and cysteine 197 are joined by a disulfide bond. N-linked (GlcNAc...) asparagine glycosylation occurs at asparagine 251. 3 helical membrane-spanning segments follow: residues 269–289 (LIQIYIPSGLIVVISWVSFWL), 298–320 (VALGVTTVLTMTTLMSSTNAALP), and 330–350 (VYLGTCFVMVFASLLEYATVG). Residues 351–540 (YMAKRIQMRK…TPSDIDKYSR (190 aa)) lie on the Cytoplasmic side of the membrane. 2 disordered regions span residues 372 to 418 (QKKQ…QTVS) and 452 to 507 (HDPK…GDAE). The span at 398 to 412 (HGHGHGHHSHGHPHV) shows a compositional bias: basic residues. Residues 475-490 (PVGPHGPGPQGPPGGP) show a composition bias toward pro residues. Residues 491–501 (PAGGGGGGAPP) show a composition bias toward gly residues. A helical transmembrane segment spans residues 541–561 (IVFPVCFVCFNLMYWIIYLHV).

This sequence belongs to the ligand-gated ion channel (TC 1.A.9) family. Gamma-aminobutyric acid receptor (TC 1.A.9.5) subfamily. As to quaternary structure, homomultimer.

The protein localises to the postsynaptic cell membrane. It localises to the cell membrane. GABA, an inhibitory neurotransmitter, mediates neuronal inhibition by binding to the GABA receptor and opening an integral chloride channel. The protein is Gamma-aminobutyric acid receptor subunit beta of Musca domestica (House fly).